Reading from the N-terminus, the 521-residue chain is Bifunctional purine biosynthesis protein PurH (521 aa).

The MGS-like domain maps to 1–145 (MIKQALISVS…KNHRDVTVVV (145 aa)).

This sequence belongs to the PurH family.

The catalysed reaction is (6R)-10-formyltetrahydrofolate + 5-amino-1-(5-phospho-beta-D-ribosyl)imidazole-4-carboxamide = 5-formamido-1-(5-phospho-D-ribosyl)imidazole-4-carboxamide + (6S)-5,6,7,8-tetrahydrofolate. It carries out the reaction IMP + H2O = 5-formamido-1-(5-phospho-D-ribosyl)imidazole-4-carboxamide. Its pathway is purine metabolism; IMP biosynthesis via de novo pathway; 5-formamido-1-(5-phospho-D-ribosyl)imidazole-4-carboxamide from 5-amino-1-(5-phospho-D-ribosyl)imidazole-4-carboxamide (10-formyl THF route): step 1/1. It functions in the pathway purine metabolism; IMP biosynthesis via de novo pathway; IMP from 5-formamido-1-(5-phospho-D-ribosyl)imidazole-4-carboxamide: step 1/1. This Burkholderia thailandensis (strain ATCC 700388 / DSM 13276 / CCUG 48851 / CIP 106301 / E264) protein is Bifunctional purine biosynthesis protein PurH.